Here is a 65-residue protein sequence, read N- to C-terminus: UPF0434 protein Rpal_0270 (65 aa).

It belongs to the UPF0434 family.

The protein is UPF0434 protein Rpal_0270 of Rhodopseudomonas palustris (strain TIE-1).